Reading from the N-terminus, the 101-residue chain is Rho GTPase-activating protein 39 (101 aa).

Residues 1–96 (YEQCIAHYES…VLIQHLDTSF (96 aa)) enclose the Rho-GAP domain.

In terms of tissue distribution, preoptic area and testis.

The sequence is that of Rho GTPase-activating protein 39 (Arhgap39) from Rattus norvegicus (Rat).